The chain runs to 221 residues: Cytochrome c biogenesis ATP-binding export protein CcmA (221 aa).

One can recognise an ABC transporter domain in the interval 14–221; it reads LACHDVSCLR…FDLLDESHFS (208 aa). 46–53 contacts ATP; the sequence is GANGIGKS.

This sequence belongs to the ABC transporter superfamily. CcmA exporter (TC 3.A.1.107) family. The complex is composed of two ATP-binding proteins (CcmA) and two transmembrane proteins (CcmB).

It is found in the cell inner membrane. The catalysed reaction is heme b(in) + ATP + H2O = heme b(out) + ADP + phosphate + H(+). In terms of biological role, part of the ABC transporter complex CcmAB involved in the biogenesis of c-type cytochromes; once thought to export heme, this seems not to be the case, but its exact role is uncertain. Responsible for energy coupling to the transport system. This Zymomonas mobilis subsp. mobilis (strain ATCC 31821 / ZM4 / CP4) protein is Cytochrome c biogenesis ATP-binding export protein CcmA.